Here is a 211-residue protein sequence, read N- to C-terminus: MKAQKYSKEGKLISEIELPSALFESKLSVASIYEAIKAENANLRSGNHATKTRSMVSGGGKKPWSQKGTGRARQGSTRAPHWVGGGTVHGPQKRDYSYKVSSKLKHRAVLSILGKKAQASAVKVVEDLDPKEYNTKAFDSIFKNMNLKNTGVIGLLVQGENDFLKKSVRNIPTVKYINSKRISCRDILYNRNLVITEAALKEMLVQYGAQK.

The segment covering 46-55 (GNHATKTRSM) has biased composition (polar residues). The interval 46 to 89 (GNHATKTRSMVSGGGKKPWSQKGTGRARQGSTRAPHWVGGGTVH) is disordered.

The protein belongs to the universal ribosomal protein uL4 family. In terms of assembly, part of the 50S ribosomal subunit.

Functionally, one of the primary rRNA binding proteins, this protein initially binds near the 5'-end of the 23S rRNA. It is important during the early stages of 50S assembly. It makes multiple contacts with different domains of the 23S rRNA in the assembled 50S subunit and ribosome. Forms part of the polypeptide exit tunnel. The protein is Large ribosomal subunit protein uL4 of Leptospira interrogans serogroup Icterohaemorrhagiae serovar copenhageni (strain Fiocruz L1-130).